The chain runs to 856 residues: Leucine--tRNA ligase (856 aa).

Residues 53–63 (PYPSGNLHMGH) carry the 'HIGH' region motif. The 'KMSKS' region motif lies at 622–626 (KMSKS). K625 lines the ATP pocket.

It belongs to the class-I aminoacyl-tRNA synthetase family.

It localises to the cytoplasm. The catalysed reaction is tRNA(Leu) + L-leucine + ATP = L-leucyl-tRNA(Leu) + AMP + diphosphate. The chain is Leucine--tRNA ligase from Prochlorococcus marinus (strain MIT 9312).